The chain runs to 294 residues: Mating type protein mtA-1 (294 aa).

Residues 46 to 101 (TAKKKVNGFMGFRSNYSPLFSYLPQKMRSPFMTILWQYDPYHNEWDFMCSVYSSIR) constitute a DNA-binding region (alpha box).

Belongs to the MATALPHA1 family.

Its subcellular location is the nucleus. Functionally, mating type proteins are sequence specific DNA-binding proteins that act as master switches in fungal differentiation by controlling gene expression in a cell type-specific fashion. Transcriptional activator that induces the transcription of alpha-specific genes. The protein is Mating type protein mtA-1 (MTA1) of Sordaria equina.